We begin with the raw amino-acid sequence, 197 residues long: MRFDAADAHWRETPRPGASSAQKDWLTRGGSLTAHLARLGRVTVRVTRETVAAPWADEHRALSCASRAPVWVREVVLAVDGAPFVAAHSIAPLAASKGVWQAMRRLRTRPLAELLYSDPEVTRSALVSRRVLAGHPLFSLASLALARAYATEHAFAARRSVFERRGTPLMVTECMLPALWRHLDAHGERRARGLEQT.

Over residues 1 to 14 the composition is skewed to basic and acidic residues; it reads MRFDAADAHWRETP. The tract at residues 1–23 is disordered; that stretch reads MRFDAADAHWRETPRPGASSAQK. Arginine 73, leucine 111, and glutamate 173 together coordinate substrate.

It belongs to the UbiC family.

Its subcellular location is the cytoplasm. The catalysed reaction is chorismate = 4-hydroxybenzoate + pyruvate. Its pathway is cofactor biosynthesis; ubiquinone biosynthesis. Functionally, removes the pyruvyl group from chorismate, with concomitant aromatization of the ring, to provide 4-hydroxybenzoate (4HB) for the ubiquinone pathway. This is Probable chorismate pyruvate-lyase 2 from Burkholderia pseudomallei (strain 1710b).